A 274-amino-acid polypeptide reads, in one-letter code: Diaminopimelate epimerase (274 aa).

Residues asparagine 11, glutamine 44, and asparagine 64 each coordinate substrate. Cysteine 73 (proton donor) is an active-site residue. Substrate contacts are provided by residues 74–75 (GN), asparagine 157, asparagine 190, and 208–209 (ER). Catalysis depends on cysteine 217, which acts as the Proton acceptor. 218-219 (GS) is a substrate binding site.

This sequence belongs to the diaminopimelate epimerase family. In terms of assembly, homodimer.

Its subcellular location is the cytoplasm. It carries out the reaction (2S,6S)-2,6-diaminopimelate = meso-2,6-diaminopimelate. It participates in amino-acid biosynthesis; L-lysine biosynthesis via DAP pathway; DL-2,6-diaminopimelate from LL-2,6-diaminopimelate: step 1/1. Its function is as follows. Catalyzes the stereoinversion of LL-2,6-diaminopimelate (L,L-DAP) to meso-diaminopimelate (meso-DAP), a precursor of L-lysine and an essential component of the bacterial peptidoglycan. In Haemophilus ducreyi (strain 35000HP / ATCC 700724), this protein is Diaminopimelate epimerase.